Here is an 846-residue protein sequence, read N- to C-terminus: MSKPTPMMTQYLQMKEQYKDCILFFRLGDFYEMFYEDAELTAKELEITLTRRDKKNNIPMCGVPHHSAKVYIERLIEKGYKVAIAEQMEDPKQVKGMVKREVVKIITPGTVMDDMISENESNYIASIHHEEGFTLAYSDVSTGELKVTQLNEDEMLNELSSVNPKEIITNIDLNEVLINKIKMITDVISRFEVNDTFKQADGVDQSLQPAVNLLLSYIQYTQMRALAHIDEAVYYEPVHYMRLDMYAKRNLELTESIRHKNKKGTLLSIFNQCKTPMGNRLVKEWIERPLLNRQEIEERHNGVELFNDNFILRHQLREALTHVYDIERLAGRVQFGNVSAKDLVQLKYSLEQLPMIQSLLKEHDEVIRTLDNIDALQPLYDMLEASLLDEAPTSIKDGGIFKDGFNNDVDELRYASKNGKQWLNELQAKERERTGVKSLKIGYNKVFGYYIEISKANLVNLDVDAFGYTRKQTLSNAERFITEELKEKESLILGAEEKLMNLEYELFIQLRDFVKTFILNLKQQAKNIAVLDCLQNFSEVATKHQYIKPIISGTKVLNIEDARHPVVETVMERDQYVANDCKLDDHTFIYLITGPNMSGKSTYMRQVALISIMAQMGAFVPASYAEVPIFDQIFTRIGAADDLVSGQSTFMVEMLEAKNALQNATDNSLIIFDEIGRGTSTYDGLSLAQSMIEYVHNKIGAKTLFSTHYHELVDLEQTLDGLNNIHVAAKEYNGELIFLHKVMPGAVEHSYGIHVAKLAQLPAEIIERSSELLDEFEHNEKVRKGDSNKIIQPSFNLFEIENENTNKYNANHEHDLIIQQIKDISIDELTPIEALLKLQEIKSRIK.

ATP is bound at residue 594 to 601 (GPNMSGKS).

This sequence belongs to the DNA mismatch repair MutS family.

In terms of biological role, this protein is involved in the repair of mismatches in DNA. It is possible that it carries out the mismatch recognition step. This protein has a weak ATPase activity. The sequence is that of DNA mismatch repair protein MutS from Macrococcus caseolyticus (strain JCSC5402) (Macrococcoides caseolyticum).